The chain runs to 647 residues: DNA mismatch repair protein MutL (647 aa).

The interval Q346–P378 is disordered.

This sequence belongs to the DNA mismatch repair MutL/HexB family.

This protein is involved in the repair of mismatches in DNA. It is required for dam-dependent methyl-directed DNA mismatch repair. May act as a 'molecular matchmaker', a protein that promotes the formation of a stable complex between two or more DNA-binding proteins in an ATP-dependent manner without itself being part of a final effector complex. This chain is DNA mismatch repair protein MutL, found in Limosilactobacillus fermentum (strain NBRC 3956 / LMG 18251) (Lactobacillus fermentum).